We begin with the raw amino-acid sequence, 135 residues long: Small ribosomal subunit protein bS6 (135 aa).

Lys-93 is modified (N6-acetyllysine). The disordered stretch occupies residues 98 to 135 (EASPMVKAKDERRERRDDFANETADDAEAGDSEEEEEE). A compositionally biased stretch (basic and acidic residues) spans 104 to 116 (KAKDERRERRDDF). Over residues 120–135 (TADDAEAGDSEEEEEE) the composition is skewed to acidic residues.

It belongs to the bacterial ribosomal protein bS6 family. In terms of assembly, part of the 30S ribosomal subunit. Interacts weakly with uL2 in one of the 3.5 A resolved structures. 5 different forms of the protein, varying only in the number of C-terminal glutamate residues, were isolated. The sequence shown is form bS6-6, which is the longest. The first two Glu are encoded by the rpsF gene, the other Glu are added post-translationally by the RimK enzyme.

Its function is as follows. Binds together with bS18 to 16S ribosomal RNA. This Escherichia coli (strain K12) protein is Small ribosomal subunit protein bS6 (rpsF).